A 247-amino-acid polypeptide reads, in one-letter code: Probable transcriptional regulatory protein lpg1286 (247 aa).

It belongs to the TACO1 family.

The protein localises to the cytoplasm. This Legionella pneumophila subsp. pneumophila (strain Philadelphia 1 / ATCC 33152 / DSM 7513) protein is Probable transcriptional regulatory protein lpg1286.